Reading from the N-terminus, the 364-residue chain is Probable dual-specificity RNA methyltransferase RlmN (364 aa).

Glu-109 acts as the Proton acceptor in catalysis. The Radical SAM core domain maps to 123–351 (PKARLTVCVS…VSVRYSRGLE (229 aa)). Cys-130 and Cys-356 form a disulfide bridge. Residues Cys-137, Cys-141, and Cys-144 each contribute to the [4Fe-4S] cluster site. S-adenosyl-L-methionine contacts are provided by residues 184–185 (GE), Ser-214, 237–239 (SLH), and Asn-313. The active-site S-methylcysteine intermediate is the Cys-356.

It belongs to the radical SAM superfamily. RlmN family. Requires [4Fe-4S] cluster as cofactor.

The protein localises to the cytoplasm. The enzyme catalyses adenosine(2503) in 23S rRNA + 2 reduced [2Fe-2S]-[ferredoxin] + 2 S-adenosyl-L-methionine = 2-methyladenosine(2503) in 23S rRNA + 5'-deoxyadenosine + L-methionine + 2 oxidized [2Fe-2S]-[ferredoxin] + S-adenosyl-L-homocysteine. The catalysed reaction is adenosine(37) in tRNA + 2 reduced [2Fe-2S]-[ferredoxin] + 2 S-adenosyl-L-methionine = 2-methyladenosine(37) in tRNA + 5'-deoxyadenosine + L-methionine + 2 oxidized [2Fe-2S]-[ferredoxin] + S-adenosyl-L-homocysteine. Specifically methylates position 2 of adenine 2503 in 23S rRNA and position 2 of adenine 37 in tRNAs. This chain is Probable dual-specificity RNA methyltransferase RlmN, found in Nostoc punctiforme (strain ATCC 29133 / PCC 73102).